The sequence spans 261 residues: Hemin import ATP-binding protein HmuV (261 aa).

Positions 3 to 243 (LQAQDLSVDR…ANLRRVYGVE (241 aa)) constitute an ABC transporter domain. Residue 35 to 42 (GANGAGKS) participates in ATP binding.

This sequence belongs to the ABC transporter superfamily. Heme (hemin) importer (TC 3.A.1.14.5) family. As to quaternary structure, the complex is composed of two ATP-binding proteins (HmuV), two transmembrane proteins (HmuU) and a solute-binding protein (HmuT).

The protein localises to the cell inner membrane. Its function is as follows. Part of the ABC transporter complex HmuTUV involved in hemin import. Responsible for energy coupling to the transport system. The chain is Hemin import ATP-binding protein HmuV from Bordetella avium (strain 197N).